The primary structure comprises 94 residues: uncharacterized protein (94 aa).

This is an uncharacterized protein from Schizosaccharomyces pombe (strain 972 / ATCC 24843) (Fission yeast).